The sequence spans 334 residues: Chitin synthase export chaperone (334 aa).

Helical transmembrane passes span 49 to 69 (IIFEGAASVMHIVALIMTVIM), 85 to 105 (ILSFFYLYMLLTAMSLIIDAG), 123 to 143 (GLSSAVITCLLINGFVGFQLY), 159 to 179 (LAAFAISFLVSLATFKSWAGL), 185 to 205 (VGLFVVLYLLNAVQLFVYVAM), 220 to 240 (LGDIAFGIFFFVAGQVLLYAF), and 244 to 264 (ICIAISHYLDGLFLATVCNLL).

It belongs to the CHS7 family.

The protein localises to the endoplasmic reticulum membrane. Chaperone required for the export of the chitin synthase chs3 from the endoplasmic reticulum. Plays a critical role in cell wall integrity and virulence. The protein is Chitin synthase export chaperone of Fusarium oxysporum f. sp. lycopersici (strain 4287 / CBS 123668 / FGSC 9935 / NRRL 34936) (Fusarium vascular wilt of tomato).